The primary structure comprises 23 residues: Protein YsaE (23 aa).

The protein is Protein YsaE of Escherichia coli (strain K12).